Consider the following 176-residue polypeptide: Ribosome maturation factor RimM (176 aa).

A PRC barrel domain is found at 99-173; the sequence is KEGEFHLVDL…WLLIKPPPGL (75 aa).

This sequence belongs to the RimM family. Binds ribosomal protein uS19.

Its subcellular location is the cytoplasm. Its function is as follows. An accessory protein needed during the final step in the assembly of 30S ribosomal subunit, possibly for assembly of the head region. Essential for efficient processing of 16S rRNA. May be needed both before and after RbfA during the maturation of 16S rRNA. It has affinity for free ribosomal 30S subunits but not for 70S ribosomes. This Prochlorococcus marinus (strain MIT 9211) protein is Ribosome maturation factor RimM.